The chain runs to 314 residues: Inosine-uridine preferring nucleoside hydrolase (314 aa).

Asp-10 serves as a coordination point for Ca(2+). Asp-14 contacts substrate. Residues Asp-15 and Thr-126 each coordinate Ca(2+). The substrate site is built by Asn-160, Glu-166, and Asn-168. The active-site Proton donor is the His-240. Position 241 (Asp-241) interacts with Ca(2+).

Belongs to the IUNH family. Homotetramer. Requires Ca(2+) as cofactor.

The catalysed reaction is inosine + H2O = hypoxanthine + D-ribose. It carries out the reaction uridine + H2O = D-ribose + uracil. It participates in purine metabolism; purine nucleoside salvage. Its activity is regulated as follows. Is potently inhibited by immucillin A and immucillin ACAP, which are transition state inhibitors. In terms of biological role, catalyzes the hydrolysis of the N-glycosidic bond of all of the commonly occurring purine and pyrimidine nucleosides into ribose and the associated base, but has a preference for inosine and uridine as substrates. Likely functions in purine salvage from the host, a fundamental pathway since protozoan parasites such as L.major are incapable of de novo purine biosynthesis. The polypeptide is Inosine-uridine preferring nucleoside hydrolase (NSNH) (Leishmania major).